The sequence spans 119 residues: Small ribosomal subunit protein eS25 (119 aa).

The tract at residues 1–42 is disordered; sequence MPPKKDTKASAKQPQKTQKKKEGSGGGKAKKKKWSKGKVRDK. A compositionally biased stretch (basic residues) spans 28–37; it reads KAKKKKWSKG.

It belongs to the eukaryotic ribosomal protein eS25 family.

The protein is Small ribosomal subunit protein eS25 (RpS25) of Spodoptera frugiperda (Fall armyworm).